A 506-amino-acid chain; its full sequence is MEPRTLDNVASLAYFAPELVLIAAALLLVVWDLASPARLKLAGLVILSLAALACSGGLGAYFLATDAAPRALFHGLLAFDRFSNLFRVIFALVTGAIVLFLVPPRAPGIEPELRRDSGELFTLILVLSLGMNLMAASRHLLLIYLSLELVSVISFVLAGFKINDAKSSEAALKYVIFGGVASGIMLYGMSWIFGITASMRLDECAARIAALTAQQGKVPEVVFVGTAFMLAGFGYKISAAPFHMWTPDVYEGAPTPVTAFLSVGPKAAGFAVLIRFFSDALGAGSAPPGVATPWPVLFGCLAMATMTVGNLSALEQENVKRMLAYSSIAHAGYMLLGFSVFSGAGVAAIAFYIVTYCFMNLGAFMVVMAVAEESGGDETFAAFRGLGRRAPLVAAAMAVFLVSLTGLPPTAGFIGKFYLFSALLAAGGAWSWVIAVVGVLNSVISLFYYARLLRTMYLDRSDRTEPTPVRPLLGGTACALAIPTVLLGVYWGPVYDFVARSVSMLR.

The next 14 helical transmembrane spans lie at 11 to 31 (SLAY…LVVW), 44 to 64 (LVIL…YFLA), 82 to 102 (FSNL…LFLV), 117 to 137 (SGEL…MAAS), 140 to 160 (LLLI…LAGF), 175 to 195 (VIFG…IFGI), 222 to 242 (VFVG…AAPF), 254 to 274 (PTPV…AVLI), 289 to 309 (GVAT…MTVG), 323 to 345 (LAYS…SGAG), 356 to 376 (YCFM…ESGG), 394 to 414 (AAAM…AGFI), 419 to 439 (LFSA…VVGV), and 472 to 492 (LLGG…VYWG).

Belongs to the complex I subunit 2 family. As to quaternary structure, NDH-1 is composed of 14 different subunits. Subunits NuoA, H, J, K, L, M, N constitute the membrane sector of the complex.

It localises to the cell inner membrane. The catalysed reaction is a quinone + NADH + 5 H(+)(in) = a quinol + NAD(+) + 4 H(+)(out). Its function is as follows. NDH-1 shuttles electrons from NADH, via FMN and iron-sulfur (Fe-S) centers, to quinones in the respiratory chain. The immediate electron acceptor for the enzyme in this species is believed to be ubiquinone. Couples the redox reaction to proton translocation (for every two electrons transferred, four hydrogen ions are translocated across the cytoplasmic membrane), and thus conserves the redox energy in a proton gradient. The protein is NADH-quinone oxidoreductase subunit N 2 of Sorangium cellulosum (strain So ce56) (Polyangium cellulosum (strain So ce56)).